We begin with the raw amino-acid sequence, 345 residues long: Phosphate acyltransferase (345 aa).

It belongs to the PlsX family. Homodimer. Probably interacts with PlsY.

Its subcellular location is the cytoplasm. The catalysed reaction is a fatty acyl-[ACP] + phosphate = an acyl phosphate + holo-[ACP]. The protein operates within lipid metabolism; phospholipid metabolism. Catalyzes the reversible formation of acyl-phosphate (acyl-PO(4)) from acyl-[acyl-carrier-protein] (acyl-ACP). This enzyme utilizes acyl-ACP as fatty acyl donor, but not acyl-CoA. The polypeptide is Phosphate acyltransferase (Chromobacterium violaceum (strain ATCC 12472 / DSM 30191 / JCM 1249 / CCUG 213 / NBRC 12614 / NCIMB 9131 / NCTC 9757 / MK)).